We begin with the raw amino-acid sequence, 320 residues long: Bifunctional ligase/repressor BirA (320 aa).

The segment at residues 22–41 is a DNA-binding region (H-T-H motif); the sequence is GEQLGERLGMSRAAINKHIQ. The BPL/LPL catalytic domain occupies 66–254; it reads LLDADRIHSQ…KLRAALELFE (189 aa). Biotin is bound by residues 89 to 91, Q112, 116 to 118, and K183; these read STN and RGR.

The protein belongs to the biotin--protein ligase family.

The catalysed reaction is biotin + L-lysyl-[protein] + ATP = N(6)-biotinyl-L-lysyl-[protein] + AMP + diphosphate + H(+). In terms of biological role, acts both as a biotin--[acetyl-CoA-carboxylase] ligase and a biotin-operon repressor. In the presence of ATP, BirA activates biotin to form the BirA-biotinyl-5'-adenylate (BirA-bio-5'-AMP or holoBirA) complex. HoloBirA can either transfer the biotinyl moiety to the biotin carboxyl carrier protein (BCCP) subunit of acetyl-CoA carboxylase, or bind to the biotin operator site and inhibit transcription of the operon. In Salmonella typhimurium (strain LT2 / SGSC1412 / ATCC 700720), this protein is Bifunctional ligase/repressor BirA.